The sequence spans 256 residues: Lysosomal membrane ascorbate-dependent ferrireductase CYB561A3 (256 aa).

Over 1–3 (MAS) the chain is Cytoplasmic. A helical membrane pass occupies residues 4–24 (GWFYMSCMVLGSLGSMCILFT). Positions 12–219 (VLGSLGSMCI…FGLLVLYILL (208 aa)) constitute a Cytochrome b561 domain. At 25 to 40 (TYWMQYWRGGFAWDGT) the chain is on the lumenal side. The helical transmembrane segment at 41–61 (VLMFNWHPVLMVSGMVVLYGA) threads the bilayer. Residues His-47 and Arg-67 each coordinate heme b. At 62–83 (ASLVYRLPASWVGPKLPWKVLH) the chain is on the cytoplasmic side. L-ascorbate contacts are provided by Lys-76 and Lys-80. Heme b is bound at residue His-83. Residues 84-104 (AALHLLAFTVTVVGLTAVFGF) traverse the membrane as a helical segment. At 105–119 (HNHSKITHLYSLHSW) the chain is on the lumenal side. N-linked (GlcNAc...) asparagine glycosylation is present at Asn-106. Residues 112 to 115 (HLYS) and His-117 each bind heme b. Residues 120 to 140 (LGITTVALFACQWFLGFAVFL) form a helical membrane-spanning segment. Over 141 to 154 (LPWASQWLRSLLKP) the chain is Cytoplasmic. L-ascorbate is bound at residue Arg-149. The helical transmembrane segment at 155 to 175 (VHVFFGACILSLSIASVISGI) threads the bilayer. Heme b contacts are provided by His-156 and Glu-177. At 176–202 (NEKLFFVLKNATRPYSSLPGEAVFANS) the chain is on the lumenal side. Residues 203 to 223 (TGILVVSFGLLVLYILLASSW) form a helical membrane-spanning segment. Arg-224 contributes to the heme b binding site. The Cytoplasmic segment spans residues 224–256 (RRPDPGALTDRQVWLLVSHYRWDKAKKACFAPC).

In terms of assembly, homodimer. Heme b serves as cofactor. Post-translationally, N-glycosylated.

It localises to the late endosome membrane. The protein resides in the lysosome membrane. The enzyme catalyses Fe(3+)(out) + L-ascorbate(in) = monodehydro-L-ascorbate radical(in) + Fe(2+)(out) + H(+). Its function is as follows. Transmembrane reductase that uses ascorbate as an electron donor in the cytoplasm and transfers electrons across membranes to reduce iron cations Fe(3+) into Fe(2+) in the lumen of the late endosome and lysosome. Reduced iron can then be extruded from the late endosome and lysosome to the cytoplasm by divalent metal-specific transporters. It is therefore most probably involved in endosomal and lysosomal cellular iron homeostasis. This chain is Lysosomal membrane ascorbate-dependent ferrireductase CYB561A3, found in Rattus norvegicus (Rat).